Here is a 479-residue protein sequence, read N- to C-terminus: HSPB1-associated protein 1 (479 aa).

Positions 1 to 25 (MEAGCEGSSPQTLGERTMGEEGERV) are disordered. The interval 88–208 (ETECSYVDAT…EDTPFLYPTR (121 aa)) is interaction with HSPB1. Residues 124–288 (WAYADYKYFV…HLARVEEAVT (165 aa)) form the JmjC domain. A disordered region spans residues 347-412 (PRANGEEPGV…GDSQECTSRN (66 aa)). Basic and acidic residues predominate over residues 356–369 (VQEHMEVEQARDPS).

As to quaternary structure, interacts with CRYAB and HSPB1. As to expression, widely expressed. Highly expressed by Sertoli cells in testis (at protein level).

The protein resides in the cytoplasm. In terms of biological role, may play a role in cellular stress response. In Rattus norvegicus (Rat), this protein is HSPB1-associated protein 1 (Hspbap1).